The primary structure comprises 82 residues: ATP synthase subunit c, chloroplastic (82 aa).

2 helical membrane passes run 3–23 (PIIS…AAIG) and 57–77 (LAFM…LLFA).

It belongs to the ATPase C chain family. As to quaternary structure, F-type ATPases have 2 components, F(1) - the catalytic core - and F(0) - the membrane proton channel. F(1) has five subunits: alpha(3), beta(3), gamma(1), delta(1), epsilon(1). F(0) has four main subunits: a(1), b(1), b'(1) and c(10-14). The alpha and beta chains form an alternating ring which encloses part of the gamma chain. F(1) is attached to F(0) by a central stalk formed by the gamma and epsilon chains, while a peripheral stalk is formed by the delta, b and b' chains.

It is found in the plastid. The protein localises to the chloroplast thylakoid membrane. Functionally, f(1)F(0) ATP synthase produces ATP from ADP in the presence of a proton or sodium gradient. F-type ATPases consist of two structural domains, F(1) containing the extramembraneous catalytic core and F(0) containing the membrane proton channel, linked together by a central stalk and a peripheral stalk. During catalysis, ATP synthesis in the catalytic domain of F(1) is coupled via a rotary mechanism of the central stalk subunits to proton translocation. In terms of biological role, key component of the F(0) channel; it plays a direct role in translocation across the membrane. A homomeric c-ring of between 10-14 subunits forms the central stalk rotor element with the F(1) delta and epsilon subunits. This is ATP synthase subunit c, chloroplastic from Cyanidium caldarium (Red alga).